Consider the following 292-residue polypeptide: Elongation factor Ts (292 aa).

An involved in Mg(2+) ion dislocation from EF-Tu region spans residues 80–83 (TDFV).

It belongs to the EF-Ts family.

The protein resides in the cytoplasm. Functionally, associates with the EF-Tu.GDP complex and induces the exchange of GDP to GTP. It remains bound to the aminoacyl-tRNA.EF-Tu.GTP complex up to the GTP hydrolysis stage on the ribosome. In Cupriavidus metallidurans (strain ATCC 43123 / DSM 2839 / NBRC 102507 / CH34) (Ralstonia metallidurans), this protein is Elongation factor Ts.